The following is a 229-amino-acid chain: Potassium/proton antiporter CemA (229 aa).

The next 3 helical transmembrane spans lie at 7–27 (LTPL…SISF), 106–126 (IILH…YSIL), and 189–209 (IISG…KYWI).

This sequence belongs to the CemA family.

Its subcellular location is the plastid. The protein localises to the chloroplast inner membrane. The enzyme catalyses K(+)(in) + H(+)(out) = K(+)(out) + H(+)(in). Functionally, contributes to K(+)/H(+) antiport activity by supporting proton efflux to control proton extrusion and homeostasis in chloroplasts in a light-dependent manner to modulate photosynthesis. Prevents excessive induction of non-photochemical quenching (NPQ) under continuous-light conditions. Indirectly promotes efficient inorganic carbon uptake into chloroplasts. The sequence is that of Potassium/proton antiporter CemA from Liriodendron tulipifera (Tuliptree).